The following is a 188-amino-acid chain: Xanthine phosphoribosyltransferase (188 aa).

The xanthine site is built by L20 and N27. A127–A131 contacts 5-phospho-alpha-D-ribose 1-diphosphate. K155 contacts xanthine.

This sequence belongs to the purine/pyrimidine phosphoribosyltransferase family. Xpt subfamily. Homodimer.

Its subcellular location is the cytoplasm. It catalyses the reaction XMP + diphosphate = xanthine + 5-phospho-alpha-D-ribose 1-diphosphate. The protein operates within purine metabolism; XMP biosynthesis via salvage pathway; XMP from xanthine: step 1/1. In terms of biological role, converts the preformed base xanthine, a product of nucleic acid breakdown, to xanthosine 5'-monophosphate (XMP), so it can be reused for RNA or DNA synthesis. This is Xanthine phosphoribosyltransferase from Phocaeicola vulgatus (strain ATCC 8482 / DSM 1447 / JCM 5826 / CCUG 4940 / NBRC 14291 / NCTC 11154) (Bacteroides vulgatus).